Here is a 126-residue protein sequence, read N- to C-terminus: Protein ApaG (126 aa).

Residues Ser2–His126 form the ApaG domain.

The chain is Protein ApaG from Shewanella baltica (strain OS223).